We begin with the raw amino-acid sequence, 101 residues long: Eukaryotic translation initiation factor 4E-binding protein 3 (101 aa).

Residues 1-28 (MSSSTSCPIPGCRDQLPDGYSTTPGGTL) are disordered. Residues 40–46 (YDRKFLL) carry the YXXXXLphi motif motif. Residues 97-101 (FEMDM) carry the TOS motif motif.

The protein belongs to the eIF4E-binding protein family. Interacts with EIF4E. Interacts with RPA2 (via N-terminus); the interaction enhances EIF4EBP3-mediated inhibition of EIF4E-mediated mRNA nuclear export. In terms of processing, phosphorylated.

It localises to the cytoplasm. It is found in the nucleus. Repressor of translation initiation that regulates EIF4E activity by preventing its assembly into the eIF4F complex: the hypophosphorylated form competes with EIF4G1/EIF4G3 and strongly binds to EIF4E, leading to repression of translation. In contrast, the hyperphosphorylated form dissociates from EIF4E, allowing interaction between EIF4G1/EIF4G3 and EIF4E, leading to initiation of translation. Inhibits EIF4E-mediated mRNA nuclear export. The protein is Eukaryotic translation initiation factor 4E-binding protein 3 (Eif4ebp3) of Mus musculus (Mouse).